The following is a 218-amino-acid chain: Cytochrome b6 (218 aa).

Residues 35-55 form a helical membrane-spanning segment; sequence IFYCLGGITLVCFLIQFATGF. Residue C38 coordinates heme c. The heme b site is built by H89 and H103. 3 consecutive transmembrane segments (helical) span residues 93–113, 119–139, and 189–209; these read ASMM…TGGF, LTWV…VTGY, and LHTF…FLMI. Positions 190 and 205 each coordinate heme b.

Belongs to the cytochrome b family. PetB subfamily. In terms of assembly, the 4 large subunits of the cytochrome b6-f complex are cytochrome b6, subunit IV (17 kDa polypeptide, PetD), cytochrome f and the Rieske protein, while the 4 small subunits are PetG, PetL, PetM and PetN. The complex functions as a dimer. It depends on heme b as a cofactor. The cofactor is heme c.

Its subcellular location is the cellular thylakoid membrane. Functionally, component of the cytochrome b6-f complex, which mediates electron transfer between photosystem II (PSII) and photosystem I (PSI), cyclic electron flow around PSI, and state transitions. In Synechococcus sp. (strain CC9605), this protein is Cytochrome b6.